The chain runs to 518 residues: Bifunctional enzyme NanE/NanK (518 aa).

A manNAc-6-P epimerase region spans residues 1–234 (MCRVQGMIEE…DAVESAAKPS (234 aa)). The manNAc kinase stretch occupies residues 235-518 (SPVLAFDIGG…VADLAATYFS (284 aa)). ATP-binding positions include 239 to 246 (AFDIGGTK) and 365 to 372 (GIGGGIVL).

This sequence in the N-terminal section; belongs to the NanE family. The protein in the C-terminal section; belongs to the ROK (NagC/XylR) family. NanK subfamily.

It carries out the reaction an N-acyl-D-glucosamine 6-phosphate = an N-acyl-D-mannosamine 6-phosphate. It catalyses the reaction an N-acyl-D-mannosamine + ATP = an N-acyl-D-mannosamine 6-phosphate + ADP + H(+). It functions in the pathway amino-sugar metabolism; N-acetylneuraminate degradation; D-fructose 6-phosphate from N-acetylneuraminate: step 2/5. Its pathway is amino-sugar metabolism; N-acetylneuraminate degradation; D-fructose 6-phosphate from N-acetylneuraminate: step 3/5. Its function is as follows. Converts N-acetylmannosamine-6-phosphate (ManNAc-6-P) to N-acetylglucosamine-6-phosphate (GlcNAc-6-P). Functionally, catalyzes the phosphorylation of N-acetylmannosamine (ManNAc) to ManNAc-6-P. In Brucella melitensis biotype 1 (strain ATCC 23456 / CCUG 17765 / NCTC 10094 / 16M), this protein is Bifunctional enzyme NanE/NanK (nanEK).